The primary structure comprises 146 residues: Hemoglobin subunit beta-2 (146 aa).

A Globin domain is found at 2-146; sequence FLSAEEKGLV…VASALAHRYH (145 aa). Lysine 17 carries the N6-succinyllysine modification. Phosphoserine occurs at positions 44 and 50. N6-succinyllysine is present on lysine 59. Residues histidine 63 and histidine 92 each coordinate heme b. Arginine 104 is modified (asymmetric dimethylarginine).

This sequence belongs to the globin family. In terms of assembly, heterotetramer of two alpha chains and two beta chains. In terms of tissue distribution, red blood cells.

In terms of biological role, involved in oxygen transport from the lung to the various peripheral tissues. The protein is Hemoglobin subunit beta-2 (HBB2) of Panthera pardus saxicolor (Northern Persian leopard).